Consider the following 488-residue polypeptide: Palmitoyltransferase ZDHHC14 (488 aa).

Residues 1–60 (MPPGGGGPMKDCEYSQISTHSSSPMESPHKKKKIAARRKWEVFPGRNKFFCNGRIMMARQ) lie on the Cytoplasmic side of the membrane. The chain crosses the membrane as a helical span at residues 61-81 (TGVFYLTLVLILVTSGLFFAF). Topologically, residues 82 to 89 (DCPYLAVK) are lumenal. The chain crosses the membrane as a helical span at residues 90 to 110 (ITPAIPAVAGILFFFVMGTLL). Residues 111-208 (RTSFSDPGVL…GNCVGKRNYR (98 aa)) are Cytoplasmic-facing. One can recognise a DHHC domain in the interval 165–215 (KYCFTCKIFRPPRASHCSLCDNCVERFDHHCPWVGNCVGKRNYRFFYMFIL). The S-palmitoyl cysteine intermediate role is filled by Cys-195. Residues 209–229 (FFYMFILSLSFLTVFIFAFVI) form a helical membrane-spanning segment. The Lumenal segment spans residues 230–255 (THVILRSQQTGFLNALKDSPASVLEA). A helical membrane pass occupies residues 256 to 276 (VVCFFSVWSIVGLSGFHTYLI). The Cytoplasmic portion of the chain corresponds to 277–488 (SSNQTTNEDI…VRGLVKLSSV (212 aa)). Ser-455 carries the post-translational modification Phosphoserine.

It belongs to the DHHC palmitoyltransferase family. ERF2/ZDHHC9 subfamily. In terms of tissue distribution, widely expressed.

The protein localises to the endoplasmic reticulum membrane. It localises to the golgi apparatus. It is found in the golgi stack membrane. It catalyses the reaction L-cysteinyl-[protein] + hexadecanoyl-CoA = S-hexadecanoyl-L-cysteinyl-[protein] + CoA. Its function is as follows. Palmitoyltransferase that could catalyze the addition of palmitate onto various protein substrates. May have a palmitoyltransferase activity toward the beta-2 adrenergic receptor/ADRB2 and thereby regulate G protein-coupled receptor signaling. May play a role in cell differentiation and apoptosis. The chain is Palmitoyltransferase ZDHHC14 from Homo sapiens (Human).